A 287-amino-acid chain; its full sequence is 4-diphosphocytidyl-2-C-methyl-D-erythritol kinase (287 aa).

Lys12 is an active-site residue. 94–104 (PAQAGMGGGSS) is an ATP binding site. Residue Asp136 is part of the active site.

The protein belongs to the GHMP kinase family. IspE subfamily.

It carries out the reaction 4-CDP-2-C-methyl-D-erythritol + ATP = 4-CDP-2-C-methyl-D-erythritol 2-phosphate + ADP + H(+). Its pathway is isoprenoid biosynthesis; isopentenyl diphosphate biosynthesis via DXP pathway; isopentenyl diphosphate from 1-deoxy-D-xylulose 5-phosphate: step 3/6. In terms of biological role, catalyzes the phosphorylation of the position 2 hydroxy group of 4-diphosphocytidyl-2C-methyl-D-erythritol. The chain is 4-diphosphocytidyl-2-C-methyl-D-erythritol kinase from Albidiferax ferrireducens (strain ATCC BAA-621 / DSM 15236 / T118) (Rhodoferax ferrireducens).